Here is a 163-residue protein sequence, read N- to C-terminus: uncharacterized protein (163 aa).

This is an uncharacterized protein from Homo sapiens (Human).